We begin with the raw amino-acid sequence, 202 residues long: FMN-dependent NADH:quinone oxidoreductase (202 aa).

Residues serine 9, 15-17, 95-98, and 139-142 contribute to the FMN site; these read SAS, MYNF, and TSGG.

Belongs to the azoreductase type 1 family. As to quaternary structure, homodimer. The cofactor is FMN.

It catalyses the reaction 2 a quinone + NADH + H(+) = 2 a 1,4-benzosemiquinone + NAD(+). The catalysed reaction is N,N-dimethyl-1,4-phenylenediamine + anthranilate + 2 NAD(+) = 2-(4-dimethylaminophenyl)diazenylbenzoate + 2 NADH + 2 H(+). Functionally, quinone reductase that provides resistance to thiol-specific stress caused by electrophilic quinones. In terms of biological role, also exhibits azoreductase activity. Catalyzes the reductive cleavage of the azo bond in aromatic azo compounds to the corresponding amines. This Pseudomonas savastanoi pv. phaseolicola (strain 1448A / Race 6) (Pseudomonas syringae pv. phaseolicola (strain 1448A / Race 6)) protein is FMN-dependent NADH:quinone oxidoreductase.